Consider the following 200-residue polypeptide: TATA-box-binding protein 2 (200 aa).

2 consecutive repeat copies span residues 25–101 (LQNI…ARIV) and 115–192 (IQNI…YPVL).

Belongs to the TBP family. In terms of assembly, belongs to the TFIID complex together with the TBP-associated factors (TAFs). Binds DNA as monomer. Interacts with TAF1 (via N-terminus). Interacts with TFIIB1. Interacts with PTF2. Interacts with HAT5/ATHB-1 and ATHB-7. Component of a nuclear protein complex containing at least TATA binding proteins (TBPs, e.g. TBP1 and TBP2) and ATX1.

It is found in the nucleus. Its function is as follows. General transcription factor (GTF) that functions at the core of the DNA-binding multiprotein factor TFIID. Binding of TFIID to the TATA box is the initial transcriptional step of the pre-initiation complex (PIC), playing a role in the activation of eukaryotic genes transcribed by RNA polymerase II. Interacts with TFIIB1 and is required for activated transcription and possibly basal transcription. May act as GTF of RNA polymerase I-dependent transcription and rRNA synthesis. Forms a ternary complex with PBRP1 and the rDNA promoter region. The polypeptide is TATA-box-binding protein 2 (Arabidopsis thaliana (Mouse-ear cress)).